Here is a 167-residue protein sequence, read N- to C-terminus: Putative ripening-related protein 6 (167 aa).

The signal sequence occupies residues 1-23; that stretch reads MANAKQLALFAMLVLLLASCAAA. The tract at residues 28–57 is disordered; the sequence is KPDPCDGGGGGVDSHLPPGMRRCSSPAVSE.

This sequence belongs to the kiwellin family.

The protein localises to the secreted. The chain is Putative ripening-related protein 6 from Oryza sativa subsp. japonica (Rice).